Here is a 728-residue protein sequence, read N- to C-terminus: Double-strand break repair protein mre-11 (728 aa).

Residues 1–12 (MCGSDDSFDDFV) are compositionally biased toward acidic residues. Residues 1–45 (MCGSDDSFDDFVPDSQEPASSRTRNQDHLDDDEVPCSQRPDAAND) form a disordered region. Residues Asp73, His75, Asp113, and Asn181 each coordinate Mn(2+). The Proton donor role is filled by His182. The Mn(2+) site is built by His269, His301, and His303. The segment at 601-728 (KNPVADVEME…PSKKRDLSFF (128 aa)) is disordered. Acidic residues predominate over residues 607–616 (VEMEEDEDDP). The span at 622–632 (PQSTSRTNYAS) shows a compositional bias: polar residues. The segment covering 634–645 (SEDEVANSDEEM) has biased composition (acidic residues).

This sequence belongs to the MRE11/RAD32 family. In terms of assembly, component of the MRN complex composed of two heterodimers rad-50 and mre-11 associated with a single nbs-1. Mn(2+) is required as a cofactor.

It is found in the nucleus. The protein localises to the chromosome. Core component of the MRN complex, which plays a central role in double-strand break (DSB) repair, DNA recombination, maintenance of telomere integrity and meiosis. The MRN complex is involved in the repair of DNA double-strand breaks (DSBs) via homologous recombination (HR), an error-free mechanism which primarily occurs during S and G2 phases. The complex (1) mediates the end resection of damaged DNA, which generates proper single-stranded DNA, a key initial steps in HR, and is (2) required for the recruitment of other repair factors and efficient activation of ATM and ATR upon DNA damage. Within the MRN complex, mre-11 possesses both single-strand endonuclease activity and double-strand-specific 3'-5' exonuclease activity. Mre-11 first endonucleolytically cleaves the 5' strand at DNA DSB ends to prevent non-homologous end joining (NHEJ) and licence HR. It then generates a single-stranded DNA gap via 3' to 5' exonucleolytic degradation, which is required for single-strand invasion and recombination. Required for meiotic crossing over and chiasma formation. Pachytene morphology and homolog pairing are normal. Vital in long term for maintenance of reproductive capacity of subsequent generations. The sequence is that of Double-strand break repair protein mre-11 from Caenorhabditis elegans.